The sequence spans 489 residues: Glutamyl-tRNA(Gln) amidotransferase subunit A (489 aa).

Residues Lys77 and Ser157 each act as charge relay system in the active site. Residue Ser181 is the Acyl-ester intermediate of the active site.

The protein belongs to the amidase family. GatA subfamily. In terms of assembly, heterotrimer of A, B and C subunits.

It catalyses the reaction L-glutamyl-tRNA(Gln) + L-glutamine + ATP + H2O = L-glutaminyl-tRNA(Gln) + L-glutamate + ADP + phosphate + H(+). Its function is as follows. Allows the formation of correctly charged Gln-tRNA(Gln) through the transamidation of misacylated Glu-tRNA(Gln) in organisms which lack glutaminyl-tRNA synthetase. The reaction takes place in the presence of glutamine and ATP through an activated gamma-phospho-Glu-tRNA(Gln). The polypeptide is Glutamyl-tRNA(Gln) amidotransferase subunit A (Caulobacter vibrioides (strain ATCC 19089 / CIP 103742 / CB 15) (Caulobacter crescentus)).